Reading from the N-terminus, the 107-residue chain is MHHALIVARIARSPAQDIAGVFAASDPGELRHLVGVTQRSLFQFGDVYMHFIEAGAGPGPRIAKVTGHPEFVDISRKLEAYVSPYDPQTWRSPRDAMGRCFYHWERD.

It functions in the pathway antibiotic biosynthesis; curamycin biosynthesis. The polypeptide is Polyketide synthase CurG (curG) (Streptomyces cyaneus (Streptomyces curacoi)).